Reading from the N-terminus, the 588-residue chain is Probable fumarate reductase Ifc3 (588 aa).

Positions 1 to 22 are cleaved as a signal peptide; sequence MKLKYLVSAMALVVLSSGTAMA. Heme c is bound by residues H31, C37, C40, H41, C58, C61, H62, H78, H81, C87, C90, H91, G93, H94, C101, C104, and H105. Residues 135–588 form a flavoprotein-like region; that stretch reads AIAAGPSETT…DNAAKHALDK (454 aa). Residues A154, D173, N181, S182, G187, and G188 each contribute to the FAD site. Position 187 (G187) interacts with fumarate. Residue G187 participates in succinate binding. R218 contacts heme c. FAD is bound by residues V295 and D361. Succinate contacts are provided by H382, S394, and E395. S394 and E395 together coordinate fumarate. The Proton donor role is filled by R419. H521 is a binding site for fumarate. H521 serves as a coordination point for succinate. E551 is an FAD binding site. The fumarate site is built by R561 and G564. The succinate site is built by R561 and G564. FAD is bound by residues G564, A566, and I567.

As to quaternary structure, homodimer. FAD is required as a cofactor. Heme c serves as cofactor.

It localises to the periplasm. Functionally, flavocytochrome that catalyzes the reduction of fumarate to succinate in vitro. Is essentially unidirectional, catalyzing only fumarate reduction. In vitro, can use the artificial electron donor methyl viologen. May be involved in an alternative route for electron transport to Fe(3+). This chain is Probable fumarate reductase Ifc3, found in Shewanella frigidimarina (strain NCIMB 400).